We begin with the raw amino-acid sequence, 152 residues long: Large ribosomal subunit protein bL34c (152 aa).

The N-terminal 91 residues, 1–91 (MATLSLLSTG…DRCRRFVVRA (91 aa)), are a transit peptide targeting the chloroplast.

As to quaternary structure, component of the chloroplast large ribosomal subunit (LSU). Mature 70S chloroplast ribosomes of higher plants consist of a small (30S) and a large (50S) subunit. The 30S small subunit contains 1 molecule of ribosomal RNA (16S rRNA) and 24 different proteins. The 50S large subunit contains 3 rRNA molecules (23S, 5S and 4.5S rRNA) and 33 different proteins.

It localises to the plastid. It is found in the chloroplast. Functionally, component of the chloroplast ribosome (chloro-ribosome), a dedicated translation machinery responsible for the synthesis of chloroplast genome-encoded proteins, including proteins of the transcription and translation machinery and components of the photosynthetic apparatus. This Spinacia oleracea (Spinach) protein is Large ribosomal subunit protein bL34c (RPL34).